Reading from the N-terminus, the 311-residue chain is Pyrimidine-specific ribonucleoside hydrolase RihA (311 aa).

His240 is an active-site residue.

Belongs to the IUNH family. RihA subfamily.

Hydrolyzes with equal efficiency cytidine or uridine to ribose and cytosine or uracil, respectively. This Escherichia coli O139:H28 (strain E24377A / ETEC) protein is Pyrimidine-specific ribonucleoside hydrolase RihA.